Here is a 1161-residue protein sequence, read N- to C-terminus: Lethal(2) giant larvae protein (1161 aa).

Residues 15–86 (DRHRLQKDLF…NNSASELNVQ (72 aa)) are phospho-regulated basic and hydrophobic (PRBH) motif. 8 WD repeats span residues 39–72 (SALA…LYGQ), 82–128 (ELNV…DGKL), 131–167 (VSSL…EPVI), 189–223 (SIRQ…QRAY), 231–263 (SVGL…PEPP), 278–320 (SINR…GHKV), 328–358 (VIDF…AYDL), and 380–464 (TCNY…YNFK). 2 positions are modified to phosphoserine: serine 473 and serine 484. WD repeat units lie at residues 513 to 594 (KKIA…SGVL) and 603 to 664 (TCMA…LRES). Serine 679 carries the post-translational modification Phosphoserine. 4 WD repeats span residues 708-778 (VRCL…KEIQ), 787-832 (GISI…LKPI), 837-927 (LTAN…LNAA), and 941-964 (CFTN…ALAT). Phosphoserine is present on residues serine 808, serine 869, serine 876, serine 887, serine 889, and serine 893. Residue serine 1013 is modified to Phosphoserine. The segment at 1141 to 1161 (EKTNGDNKIGTPKTAPEESQF) is disordered.

Belongs to the WD repeat L(2)GL family. May form multimeric complexes. Interacts with mahj. Interacts with aPKC; leading to phosphorylation. Interacts with ball. In terms of processing, phosphorylated by aPKC which lowers lipid affinity and promotes dissociation from the cell cortex. In developing oocytes, aPKC-mediated phosphorylation restricts activity to the oocyte posterior and is required for oocyte polarity formation. Expressed in the epithelial cells of the digestive tract and in gonads.

The protein resides in the cytoplasm. It localises to the cell cortex. In terms of biological role, essential for the development of polarized epithelia, for cell polarity associated with asymmetric cell division of neuroblasts during development, and for oocyte polarity formation. Promotes the formation of actin-rich projections at the oocyte cortex and the posterior enrichment of par-1 which is required for oocyte polarization. Regulates the localization of axis-specifying morphogens such as stau and grk. Has an essential role in control of cell proliferation and differentiation during development and could act as a tumor suppressor. Functionally, has an accessory function in control of cell proliferation and differentiation during development. The sequence is that of Lethal(2) giant larvae protein (l(2)gl) from Drosophila melanogaster (Fruit fly).